A 2190-amino-acid polypeptide reads, in one-letter code: Integrator complex subunit 1 (2190 aa).

The disordered stretch occupies residues 1 to 61; that stretch reads MNRAKPTTVR…GLPSERKRDA (61 aa). Ser13 carries the post-translational modification Phosphoserine. Polar residues predominate over residues 34–44; sequence GQANESKTAST. N6-acetyllysine is present on Lys47. Thr83 is modified (phosphothreonine). A phosphoserine mark is found at Ser87, Ser307, and Ser924. A disordered region spans residues 922-945; it reads AASGEEDDEGESKEQKAKKRQRQQ. The segment covering 923 to 932 has biased composition (acidic residues); that stretch reads ASGEEDDEGE. The chain crosses the membrane as a helical span at residues 1159 to 1179; the sequence is TATMHILVVHAMVILLTLGPP. A disordered region spans residues 1311–1334; it reads SLPPRRDSTEAPKPKSSPEQPIGQ. Positions 1314–1323 are enriched in basic and acidic residues; the sequence is PRRDSTEAPK. Phosphoserine is present on residues Ser1318, Ser1326, Ser1327, and Ser1395.

Belongs to the Integrator subunit 1 family. Component of the Integrator complex, composed of core subunits INTS1, INTS2, INTS3, INTS4, INTS5, INTS6, INTS7, INTS8, INTS9/RC74, INTS10, INTS11/CPSF3L, INTS12, INTS13, INTS14 and INTS15. The core complex associates with protein phosphatase 2A subunits PPP2CA and PPP2R1A, to form the Integrator-PP2A (INTAC) complex. Interacts with ESRRB, ESRRB is not a core component of the Integrator complex and this association is a bridge for the interaction with the multiprotein complex Integrator; attracts the transcriptional machinery.

It localises to the nucleus. The protein localises to the nucleus membrane. In terms of biological role, component of the integrator complex, a multiprotein complex that terminates RNA polymerase II (Pol II) transcription in the promoter-proximal region of genes. The integrator complex provides a quality checkpoint during transcription elongation by driving premature transcription termination of transcripts that are unfavorably configured for transcriptional elongation: the complex terminates transcription by (1) catalyzing dephosphorylation of the C-terminal domain (CTD) of Pol II subunit POLR2A/RPB1 and SUPT5H/SPT5, (2) degrading the exiting nascent RNA transcript via endonuclease activity and (3) promoting the release of Pol II from bound DNA. The integrator complex is also involved in terminating the synthesis of non-coding Pol II transcripts, such as enhancer RNAs (eRNAs), small nuclear RNAs (snRNAs), telomerase RNAs and long non-coding RNAs (lncRNAs). Within the integrator complex, INTS1 is involved in the post-termination step: INTS1 displaces INTS3 and the SOSS factors, allowing the integrator complex to return to the closed conformation, ready to bind to the paused elongation complex for another termination cycle. Mediates recruitment of cytoplasmic dynein to the nuclear envelope, probably as component of the integrator complex. This Homo sapiens (Human) protein is Integrator complex subunit 1.